The following is a 358-amino-acid chain: Ribosomal RNA large subunit methyltransferase M (358 aa).

S-adenosyl-L-methionine is bound by residues serine 183, 216–219, aspartate 235, aspartate 255, and aspartate 271; that span reads APGG. Lysine 300 (proton acceptor) is an active-site residue.

It belongs to the class I-like SAM-binding methyltransferase superfamily. RNA methyltransferase RlmE family. RlmM subfamily. Monomer.

The protein localises to the cytoplasm. It catalyses the reaction cytidine(2498) in 23S rRNA + S-adenosyl-L-methionine = 2'-O-methylcytidine(2498) in 23S rRNA + S-adenosyl-L-homocysteine + H(+). Catalyzes the 2'-O-methylation at nucleotide C2498 in 23S rRNA. The chain is Ribosomal RNA large subunit methyltransferase M from Pseudomonas fluorescens (strain SBW25).